Reading from the N-terminus, the 277-residue chain is MVVKIGILKCGNIGMSPVVDLCLDERADRNDIDVRVLGSGAKMGPEQVEEVAKKMVEEIKPDFIVYIGPNPAAPGPKKAREILSAGGIPAVIIGDAPGIKDKDAMAEEGLGYVLIKCDPMIGARRQFLDPVEMAMFNADVIRVLAGTGALRVVQNAIDDMVFAVEEGKEIPLPKIVITEQKAVEAMDFANPYAKAKAMAAFVMAEKVADIDVKGCFMTKEMEKYIPIVASAHETIRYAAKLVDEARELEKATDAVSRKPHAGAGKILNKCKLMEKPE.

The protein belongs to the MTD family.

It carries out the reaction 5,10-methylenetetrahydromethanopterin + oxidized coenzyme F420-(gamma-L-Glu)(n) + 2 H(+) = 5,10-methenyl-5,6,7,8-tetrahydromethanopterin + reduced coenzyme F420-(gamma-L-Glu)(n). It participates in one-carbon metabolism; methanogenesis from CO(2); 5,10-methylene-5,6,7,8-tetrahydromethanopterin from 5,10-methenyl-5,6,7,8-tetrahydromethanopterin (coenzyme F420 route): step 1/1. Functionally, catalyzes the reversible reduction of methenyl-H(4)MPT(+) to methylene-H(4)MPT. The chain is F420-dependent methylenetetrahydromethanopterin dehydrogenase from Methanococcus maripaludis (strain DSM 14266 / JCM 13030 / NBRC 101832 / S2 / LL).